The sequence spans 270 residues: Phosphatidylglycerol--prolipoprotein diacylglyceryl transferase (270 aa).

The next 7 membrane-spanning stretches (helical) occupy residues 10–30, 56–76, 92–112, 120–140, 174–194, 202–222, and 236–256; these read VALA…LIGI, LIFW…VLFY, WKGG…AWWF, FFQL…AGRI, PSQL…LYIF, MAVS…VEFV, and WVTM…GLLW. Position 139 (Arg-139) interacts with a 1,2-diacyl-sn-glycero-3-phospho-(1'-sn-glycerol).

This sequence belongs to the Lgt family.

The protein resides in the cell inner membrane. It catalyses the reaction L-cysteinyl-[prolipoprotein] + a 1,2-diacyl-sn-glycero-3-phospho-(1'-sn-glycerol) = an S-1,2-diacyl-sn-glyceryl-L-cysteinyl-[prolipoprotein] + sn-glycerol 1-phosphate + H(+). The protein operates within protein modification; lipoprotein biosynthesis (diacylglyceryl transfer). In terms of biological role, catalyzes the transfer of the diacylglyceryl group from phosphatidylglycerol to the sulfhydryl group of the N-terminal cysteine of a prolipoprotein, the first step in the formation of mature lipoproteins. The sequence is that of Phosphatidylglycerol--prolipoprotein diacylglyceryl transferase from Pseudomonas fluorescens (strain SBW25).